Consider the following 432-residue polypeptide: Adenylosuccinate synthetase (432 aa).

GTP-binding positions include 13 to 19 (GDEGKGK) and 41 to 43 (GHT). Catalysis depends on D14, which acts as the Proton acceptor. D14 and G41 together coordinate Mg(2+). IMP-binding positions include 14-17 (DEGK), 39-42 (NAGH), T130, R144, Q225, T240, and R304. The active-site Proton donor is H42. Substrate is bound at residue 300 to 306 (ATTGRRR). Residues R306, 332 to 334 (KLD), and 415 to 417 (STG) contribute to the GTP site.

The protein belongs to the adenylosuccinate synthetase family. As to quaternary structure, homodimer. Mg(2+) serves as cofactor.

It localises to the cytoplasm. The catalysed reaction is IMP + L-aspartate + GTP = N(6)-(1,2-dicarboxyethyl)-AMP + GDP + phosphate + 2 H(+). Its pathway is purine metabolism; AMP biosynthesis via de novo pathway; AMP from IMP: step 1/2. Functionally, plays an important role in the de novo pathway of purine nucleotide biosynthesis. Catalyzes the first committed step in the biosynthesis of AMP from IMP. The polypeptide is Adenylosuccinate synthetase (Enterobacter sp. (strain 638)).